We begin with the raw amino-acid sequence, 689 residues long: Sodium-dependent phosphate transport protein 2B (689 aa).

A disordered region spans residues 1 to 41; that stretch reads MAPWPELGDAQPNPDKYLEGAAGQQPTAPDKSKETNKNNTE. Over 1-100 the chain is Cytoplasmic; the sequence is MAPWPELGDA…LCVFQGIGRL (100 aa). Residues 101-121 form a helical membrane-spanning segment; sequence ILLLGFLYFFVCSLDILSSAF. Residues 122 to 135 lie on the Extracellular side of the membrane; that stretch reads QLVGGKMAGQFFSN. Residues 136–156 form a helical membrane-spanning segment; the sequence is SSIMSNPLLGLVIGVLVTVLV. At 157 to 212 the chain is on the cytoplasmic side; it reads QSSSTSTSIVVSMVSSSLLTVRAAIPIIMGANIGTSITNTIVALMQVGDRSEFRRA. A helical transmembrane segment spans residues 213–233; the sequence is FAGATVHDFFNWLSVLVLLPV. Topologically, residues 234-362 are extracellular; that stretch reads EVATHYLEII…FVNFHLPDLA (129 aa). Residues N294, N307, and N320 are each glycosylated (N-linked (GlcNAc...) asparagine). The cysteines at positions 302 and 349 are disulfide-linked. A helical transmembrane segment spans residues 363–383; that stretch reads VGTILLILSLLVLCGCLIMIV. Over 384–407 the chain is Cytoplasmic; the sequence is KILGSVLKGQVATVIKKTINTDFP. Residues 408–428 traverse the membrane as a helical segment; it reads FPFAWLTGYLAILVGAGMTFI. The Extracellular portion of the chain corresponds to 429–485; that stretch reads VQSSSVFTSALTPLIGIGVITIERAYPLTLGSNIGTTTTAILAALASPGNALRSSLQ. A helical transmembrane segment spans residues 486 to 506; the sequence is IALCHFFFNISGILLWYPIPF. Residues 507–525 lie on the Cytoplasmic side of the membrane; the sequence is TRLPIRMAKGLGNISAKYR. A helical transmembrane segment spans residues 526–546; that stretch reads WFAVFYLIIFFFLIPLTVFGL. Topologically, residues 547-552 are extracellular; the sequence is SLAGWR. A helical transmembrane segment spans residues 553–573; sequence VLVGVGVPVVFIIILVLCLRL. Over 574 to 687 the chain is Cytoplasmic; the sequence is LQSRCPRVLP…PASDSKTECT (114 aa).

This sequence belongs to the SLC34A transporter family.

The protein resides in the apical cell membrane. It carries out the reaction 3 Na(+)(out) + phosphate(out) = 3 Na(+)(in) + phosphate(in). Functionally, involved in actively transporting phosphate into cells via Na(+) cotransport. The polypeptide is Sodium-dependent phosphate transport protein 2B (SLC34A2) (Pongo abelii (Sumatran orangutan)).